The sequence spans 668 residues: Break repair meiotic recombinase recruitment factor 1 (668 aa).

5 disordered regions span residues 1–142 (MTKR…AQSP), 155–333 (LQEA…GCSS), 349–465 (LEER…GGQN), 482–521 (VLEHREIADDPLQEPGAQQGIPDTTSELAGQRDHLPHSAD), and 642–668 (LGGKAPLPYPSKGPGNIPRGDPPWREL). The segment covering 114–125 (TRKEEMKDEDRG) has biased composition (basic and acidic residues). Polar residues predominate over residues 166–180 (QADSARPEQSSQSPV). A compositionally biased stretch (basic and acidic residues) spans 208-251 (SQDHLSEQGADDSKPETDRVPGDGGQKEHLPSIDSEGEKPDRGA). Positions 279–296 (TPASAPTSGPAPGLGPAS) are enriched in low complexity. The span at 305-316 (AQGSPDPQQTPS) shows a compositional bias: polar residues. Ser370 bears the Phosphoserine mark. The span at 391–400 (TGETTGESGE) shows a compositional bias: low complexity.

In terms of assembly, interacts with HSF2BP (via N-terminus) and BRCA2; the interaction with HSF2BP is direct and allows the formation of a ternary complex. The complex BRME1:HSF2BP:BRCA2 interacts with SPATA22, MEIOB and RAD51.

It is found in the chromosome. Meiotic recombination factor component of recombination bridges involved in meiotic double-strand break repair. Modulates the localization of recombinases DMC1:RAD51 to meiotic double-strand break (DSB) sites through the interaction with and stabilization of the BRCA2:HSF2BP complex during meiotic recombination. Indispensable for the DSB repair, homologous synapsis, and crossover formation that are needed for progression past metaphase I, is essential for spermatogenesis and male fertility. This chain is Break repair meiotic recombinase recruitment factor 1, found in Homo sapiens (Human).